A 380-amino-acid chain; its full sequence is MAPNIRKHHPLLKMINNSLIDLPTPSNISAWWNFGSLLGICLITQILTGLLLAAHYTADTTLAFSSVAHTCRNVQYGWLIRNLHANGASFFFICIYLHIGRGFYYGSYLFKETWNTGVTLLLTLMATAFVGYVLPWGQMSFWGATVITNLFSAIPYIGQTLVEWAWGGFSVDNPTLTRFFALHFLLPFMIAGLTLIHLTFLHESGSNNPLGIVSNSDKIPFHPYFSLKDILGFAIMLLLLTTLALFSPNLLGDPENFTPANPLVTPPHIKPEWYFLFAYAILRSIPNKLGGVLALAASVLILFLTPFLHKSKQRTMTFRPLSQLLFWLLVANLLILTWVGSQPVEHPFIIIGQMASITYFIIILVLFPMTSALENKMLNY.

4 helical membrane passes run 34–54 (FGSL…LLAA), 78–99 (WLIR…YLHI), 114–134 (WNTG…GYVL), and 179–199 (FFAL…IHLT). Heme b is bound by residues H84 and H98. Residues H183 and H197 each contribute to the heme b site. H202 is a binding site for a ubiquinone. 4 helical membrane passes run 227-247 (LKDI…ALFS), 289-309 (LGGV…PFLH), 321-341 (LSQL…WVGS), and 348-368 (FIII…VLFP).

This sequence belongs to the cytochrome b family. As to quaternary structure, the cytochrome bc1 complex contains 11 subunits: 3 respiratory subunits (MT-CYB, CYC1 and UQCRFS1), 2 core proteins (UQCRC1 and UQCRC2) and 6 low-molecular weight proteins (UQCRH/QCR6, UQCRB/QCR7, UQCRQ/QCR8, UQCR10/QCR9, UQCR11/QCR10 and a cleavage product of UQCRFS1). This cytochrome bc1 complex then forms a dimer. Requires heme b as cofactor.

It localises to the mitochondrion inner membrane. In terms of biological role, component of the ubiquinol-cytochrome c reductase complex (complex III or cytochrome b-c1 complex) that is part of the mitochondrial respiratory chain. The b-c1 complex mediates electron transfer from ubiquinol to cytochrome c. Contributes to the generation of a proton gradient across the mitochondrial membrane that is then used for ATP synthesis. The protein is Cytochrome b (MT-CYB) of Pharomachrus antisianus (Crested quetzal).